A 121-amino-acid polypeptide reads, in one-letter code: Mitochondrial intermembrane space cysteine motif-containing protein MIX14 (121 aa).

2 consecutive CHCH domains span residues 14 to 56 (VANC…VPSV) and 60 to 105 (MSEC…VKNK). 4 short sequence motifs (cx9C motif) span residues 17–27 (CPQEFLQYHKC), 38–48 (CKDGRMILSTC), 63–73 (CSEPMKKYDQC), and 87–97 (CLGFLQDLRKC). 4 cysteine pairs are disulfide-bonded: C17–C48, C27–C38, C63–C97, and C73–C87.

It localises to the mitochondrion intermembrane space. The polypeptide is Mitochondrial intermembrane space cysteine motif-containing protein MIX14 (MIX14) (Saccharomyces cerevisiae (strain ATCC 204508 / S288c) (Baker's yeast)).